The sequence spans 226 residues: MEAVTKLDVEGTAFDSVIIPPGSSKTHFLGGAGVRGLEIGGKFIAFTAIGIYLETDSIPFLADKWKGKTGEELAGSLDFFRDICTGPFEKFTNVTMILPLTGEQYSEKVTENCVAYWKAIGIYTDAEASAVDKFKQAFKPESFPPGSSILFTHTPSGTLKIAFSKDGSVSKDEGVLIENKALTQAVLESIIGEHGVSPAAKLSIASRLSEIMNKVGNVEEKLPVLS.

Substrate-binding residues include T47, N112, and S189.

The protein belongs to the chalcone isomerase family.

The catalysed reaction is a chalcone = a flavanone.. It functions in the pathway secondary metabolite biosynthesis; flavonoid biosynthesis. Its function is as follows. Catalyzes the intramolecular cyclization of bicyclic chalcones into tricyclic (S)-flavanones. Responsible for the isomerization of 4,2',4',6'-tetrahydroxychalcone (also termed chalcone) into naringenin. This chain is Chalcone--flavanone isomerase (CHI), found in Allium cepa (Onion).